Reading from the N-terminus, the 343-residue chain is Heat-inducible transcription repressor HrcA (343 aa).

This sequence belongs to the HrcA family.

Its function is as follows. Negative regulator of class I heat shock genes (grpE-dnaK-dnaJ and groELS operons). Prevents heat-shock induction of these operons. The protein is Heat-inducible transcription repressor HrcA of Mycobacterium marinum (strain ATCC BAA-535 / M).